The following is a 372-amino-acid chain: Sulfate/thiosulfate import ATP-binding protein CysA (372 aa).

The 235-residue stretch at 3–237 (IQVQHVTKRF…PATPFVYGFL (235 aa)) folds into the ABC transporter domain. An ATP-binding site is contributed by 35-42 (GPSGCGKT).

It belongs to the ABC transporter superfamily. Sulfate/tungstate importer (TC 3.A.1.6) family. The complex is composed of two ATP-binding proteins (CysA), two transmembrane proteins (CysT and CysW) and a solute-binding protein (CysP).

It is found in the cell inner membrane. The enzyme catalyses sulfate(out) + ATP + H2O = sulfate(in) + ADP + phosphate + H(+). It catalyses the reaction thiosulfate(out) + ATP + H2O = thiosulfate(in) + ADP + phosphate + H(+). Its function is as follows. Part of the ABC transporter complex CysAWTP involved in sulfate/thiosulfate import. Responsible for energy coupling to the transport system. The polypeptide is Sulfate/thiosulfate import ATP-binding protein CysA (Ralstonia nicotianae (strain ATCC BAA-1114 / GMI1000) (Ralstonia solanacearum)).